Consider the following 227-residue polypeptide: Orotidine 5'-phosphate decarboxylase (227 aa).

Residues aspartate 8, lysine 30, 57 to 66, threonine 116, arginine 177, glutamine 186, glycine 206, and arginine 207 each bind substrate; that span reads DLKFHDIPNT. The Proton donor role is filled by lysine 59.

This sequence belongs to the OMP decarboxylase family. Type 1 subfamily. Homodimer.

It catalyses the reaction orotidine 5'-phosphate + H(+) = UMP + CO2. Its pathway is pyrimidine metabolism; UMP biosynthesis via de novo pathway; UMP from orotate: step 2/2. Its function is as follows. Catalyzes the decarboxylation of orotidine 5'-monophosphate (OMP) to uridine 5'-monophosphate (UMP). The protein is Orotidine 5'-phosphate decarboxylase of Acinetobacter baumannii (strain AB307-0294).